A 193-amino-acid chain; its full sequence is 3-isopropylmalate dehydratase small subunit (193 aa).

It belongs to the LeuD family. LeuD type 1 subfamily. Heterodimer of LeuC and LeuD.

It catalyses the reaction (2R,3S)-3-isopropylmalate = (2S)-2-isopropylmalate. The protein operates within amino-acid biosynthesis; L-leucine biosynthesis; L-leucine from 3-methyl-2-oxobutanoate: step 2/4. Catalyzes the isomerization between 2-isopropylmalate and 3-isopropylmalate, via the formation of 2-isopropylmaleate. This is 3-isopropylmalate dehydratase small subunit from Listeria monocytogenes serovar 1/2a (strain ATCC BAA-679 / EGD-e).